A 637-amino-acid polypeptide reads, in one-letter code: Chaperone protein HtpG (637 aa).

The a; substrate-binding stretch occupies residues 1–345 (MSQQETHGFQ…SNDLPLNVSR (345 aa)). A b region spans residues 346–562 (EILQDNHVTK…EGEMSTQMIK (217 aa)). The segment at 563-637 (LMQAAGQPVP…MNQMLLANMK (75 aa)) is c.

Belongs to the heat shock protein 90 family. In terms of assembly, homodimer.

It is found in the cytoplasm. Molecular chaperone. Has ATPase activity. This chain is Chaperone protein HtpG, found in Shewanella baltica (strain OS185).